Here is a 503-residue protein sequence, read N- to C-terminus: Arabinose import ATP-binding protein AraG 1 (503 aa).

ABC transporter domains follow at residues 5–240 (LRFD…MVGR) and 251–497 (RTLG…LPQT). 37-44 (GENGAGKS) serves as a coordination point for ATP.

Belongs to the ABC transporter superfamily. Arabinose importer (TC 3.A.1.2.2) family. The complex is composed of two ATP-binding proteins (AraG), two transmembrane proteins (AraH) and a solute-binding protein (AraF).

The protein localises to the cell inner membrane. The enzyme catalyses L-arabinose(out) + ATP + H2O = L-arabinose(in) + ADP + phosphate + H(+). In terms of biological role, part of the ABC transporter complex AraFGH involved in arabinose import. Responsible for energy coupling to the transport system. This chain is Arabinose import ATP-binding protein AraG 1, found in Burkholderia cenocepacia (strain HI2424).